Reading from the N-terminus, the 69-residue chain is Pleurain-A2 (69 aa).

The N-terminal stretch at 1–22 (MFTLKKTLLLLYFLGTISISLC) is a signal peptide. The propeptide occupies 23-43 (KQERDADEDDGRKMTEEEVKR). Residues Cys-63 and Cys-69 are joined by a disulfide bond.

In terms of tissue distribution, expressed by the skin glands.

Its subcellular location is the secreted. Its function is as follows. Antimicrobial peptide. Has activity against the Gram-positive bacterium S.aureus ATCC2592 (MIC=15 ug/ml), the Gram-negative bacteria E.coli ATCC25922 (MIC=60 ug/ml), B.dysenteriae (MIC=60 ug/ml), H.pylori NTCT11637 (MIC=30 ug/ml), and the fungus C.albicans ATCC2002 (MIC=30 ug/ml). Has little hemolytic activity on rabbit red blood cells. The polypeptide is Pleurain-A2 (Nidirana pleuraden (Yunnan pond frog)).